A 744-amino-acid polypeptide reads, in one-letter code: MQAVVPLNKMTAISPEPQTLASTEQNEVPRVVTSGEQEAILRGNAADAESFRQRFRWFCYSEVAGPRKALSQLWELCNQWLRPDIHTKEQILELLVFEQFLTILPGEIRIWVKSQHPESSEEVVTLIEDLTQMLEEKDPVSQDSTVSQEENSKEDKMVTVCPNTESCESITLKDVAVNFSRGEWKKLEPFQKELYKEVLLENLRNLEFLDFPVSKLELISQLKWVELPWLLEEVSKSSRLDESALDKIIERCLRDDDHGLMEESQQYCGSSEEDHGNQGNSKGRVAQNKTLGSGSRGKKFDPDKSPFGHNFKETSDLIKHLRVYLRKKSRRYNESKKPFSFHSDLVLNRKEKTAGEKSRKSNDGGKVLSHSSALTEHQKRQKIHLGDRSQKCSKCGIIFIRRSTLSRRKTPMCEKCRKDSCQEAALNKDEGNESGEKTHKCSKCGKAFGYSASLTKHRRIHTGEKPYMCNECGKAFSDSSSLTPHHRTHSGEKPFKCDDCGKGFTLSAHLIKHQRIHTGEKPYKCKDCGRPFSDSSSLIQHQRIHTGEKPYTCSNCGKSFSHSSSLSKHQRIHTGEKPYKCGECGKAFRQNSCLTRHQRIHTGEKPYLCNDCGMTFSHFTSVIYHQRLHSGEKPYKCNQCEKAFPTHSLLSRHQRIHTGVKPYKCKECGKSFSQSSSLNEHHRIHTGEKPYECNYCGATFSRSSILVEHLKIHTGRREYECNECEKTFKSNSGLIRHRGFHSAE.

The region spanning 52–134 is the SCAN box domain; it reads RQRFRWFCYS…TLIEDLTQML (83 aa). The segment at 137–156 is disordered; the sequence is KDPVSQDSTVSQEENSKEDK. In terms of domain architecture, KRAB spans 170 to 241; it reads ITLKDVAVNF…EEVSKSSRLD (72 aa). 2 disordered regions span residues 263–308 and 350–385; these read ESQQ…SPFG and KEKT…KIHL. Polar residues predominate over residues 277-293; sequence NQGNSKGRVAQNKTLGS. 2 stretches are compositionally biased toward basic and acidic residues: residues 298-308 and 350-363; these read KKFDPDKSPFG and KEKT…KSND. 11 consecutive C2H2-type zinc fingers follow at residues 439–461, 467–489, 495–517, 523–545, 551–573, 579–601, 607–629, 635–657, 663–685, 691–713, and 719–741; these read HKCS…RRIH, YMCN…HRTH, FKCD…QRIH, YKCK…QRIH, YTCS…QRIH, YKCG…QRIH, YLCN…QRLH, YKCN…QRIH, YKCK…HRIH, YECN…LKIH, and YECN…RGFH.

Belongs to the krueppel C2H2-type zinc-finger protein family.

It is found in the nucleus. Functionally, may be involved in transcriptional regulation. The protein is Zinc finger protein 483 (ZNF483) of Homo sapiens (Human).